The chain runs to 341 residues: Fructose-1,6-bisphosphatase, cytosolic (341 aa).

4 residues coordinate Mg(2+): Glu-100, Asp-121, Leu-123, and Asp-124. Substrate contacts are provided by residues 124–127 (DGSS), Asn-215, Tyr-247, Tyr-267, and Lys-277. Glu-283 lines the Mg(2+) pocket.

The protein belongs to the FBPase class 1 family. The cofactor is Mg(2+).

Its subcellular location is the cytoplasm. It carries out the reaction beta-D-fructose 1,6-bisphosphate + H2O = beta-D-fructose 6-phosphate + phosphate. The sequence is that of Fructose-1,6-bisphosphatase, cytosolic (FBPban1) from Musa acuminata (Banana).